Here is a 362-residue protein sequence, read N- to C-terminus: Guanine nucleotide-binding protein alpha-10 subunit (362 aa).

G2 is lipidated: N-myristoyl glycine. C4 carries the S-palmitoyl cysteine lipid modification. Residues L35–I362 form the G-alpha domain. The interval S38 to T51 is G1 motif. GTP-binding positions include G43–S50, V184–T190, D209–Q213, N278–D281, and A335. Residues S50 and T190 each contribute to the Mg(2+) site. The tract at residues D182–T190 is G2 motif. A G3 motif region spans residues L205–R214. Positions I274 to D281 are G4 motif. A G5 motif region spans residues T333–S337.

It belongs to the G-alpha family. In terms of assembly, g proteins are composed of 3 units; alpha, beta and gamma. The alpha chain contains the guanine nucleotide binding site.

Its function is as follows. Guanine nucleotide-binding proteins (G proteins) are involved as modulators or transducers in various transmembrane signaling systems. This Caenorhabditis briggsae protein is Guanine nucleotide-binding protein alpha-10 subunit (gpa-10).